We begin with the raw amino-acid sequence, 570 residues long: Periplasmic trehalase (570 aa).

Positions 1–34 (MIPPEIRRSVLLQKAIKLALAGTLLTFASFSATA) are cleaved as a signal peptide. Substrate is bound by residues Arg-159, 166–167 (WD), Asn-203, 212–214 (RSQ), 284–286 (RPE), and Gly-317. Residues Asp-319 and Glu-503 each act as proton donor/acceptor in the active site. Glu-518 lines the substrate pocket. Residues 544 to 570 (KPCDSVPSTRPASLSATPTKTPSAATQ) are disordered. Positions 554–570 (PASLSATPTKTPSAATQ) are enriched in low complexity.

It belongs to the glycosyl hydrolase 37 family. Monomer.

Its subcellular location is the periplasm. The enzyme catalyses alpha,alpha-trehalose + H2O = alpha-D-glucose + beta-D-glucose. Its function is as follows. Provides the cells with the ability to utilize trehalose at high osmolarity by splitting it into glucose molecules that can subsequently be taken up by the phosphotransferase-mediated uptake system. The sequence is that of Periplasmic trehalase from Salmonella newport (strain SL254).